A 545-amino-acid chain; its full sequence is High-affinity glucose transporter 1 (545 aa).

A run of 9 helical transmembrane segments spans residues 29-49 (VFFIASISTIAGMMFGFDISS), 72-92 (GFITSSMALGSFFGSIASSFV), 100-120 (LSLLTCAFFWMVGAAIQSSVQ), 125-145 (LIIGRIISGIGVGFGSAVAPV), 157-177 (GLIGGMFQFFVTLGIMIMFYL), 192-212 (IAWGLQIVPGLCLFLGCFFIP), 291-311 (LTGMNVMMYYIVYIFQMAGYS), 317-337 (VASSIQYVINTCVTVPALYFI), and 345-365 (LLIGGATMMMAFQFGLAGILG). N-linked (GlcNAc...) asparagine glycans are attached at residues asparagine 376 and asparagine 387. Transmembrane regions (helical) follow at residues 395–415 (IACCYLFVASFAFTWGVGIWV) and 433–453 (ISTSANWILNFAIAMYTPTGF). An N-linked (GlcNAc...) asparagine glycan is attached at asparagine 455. A helical transmembrane segment spans residues 460–480 (TYIIYGVFCFAMATHVYFGFP). The disordered stretch occupies residues 524–545 (VEHEEDKLMNEDSNSESRENQA).

This sequence belongs to the major facilitator superfamily. Sugar transporter (TC 2.A.1.1) family. As to quaternary structure, interacts with the human complement factors FH and C4BP. Also binds human immunodeficiency virus (HIV) protein gp160.

Its subcellular location is the cell membrane. Functionally, high-affinity glucose transporter. Acts as a multifunctional complement-evasion molecule that causes down-regulation of complement activation by acquisition of human complement factors FH and C4BP. Also functions as a human immunodeficiency virus (HIV) receptor via binding the viral gp160 protein. Modulates hyphae formation. In Candida albicans (strain SC5314 / ATCC MYA-2876) (Yeast), this protein is High-affinity glucose transporter 1.